Here is a 77-residue protein sequence, read N- to C-terminus: Lantipeptide prochlorosin 4.3 (77 aa).

Residues M1–G64 constitute a propeptide that is removed on maturation. At T65 the chain carries 2,3-didehydrobutyrine. A cross-link (lanthionine (Ser-Cys)) is located at residues S67–C70. A cross-link (beta-methyllanthionine (Thr-Cys)) is located at residues T72 to C76.

Post-translationally, cross-links are proved in vitro, when coepressed in E.coli with the ProcM lanthionine synthetase. The lanthionine residue has both a DL configuration (with 2S,6R stereochemistry) and a LL configuration (with 2R,6R stereochemistry). DL and LL diastomers have a 4:1 ratio. It is unknown whether nonenzymatic cyclization occur, but authors favor a model in which ProcM does generate all thioether cross-links. The beta-methyllanthionine residue has a DL configuration (with 2S,3S,6R stereochemistry). In terms of processing, maturation of prochlorosin involves the enzymatic conversion of Thr, and Ser into dehydrated AA and the formation of thioether bonds with cysteines. This is followed by membrane translocation and cleavage of the modified precursor.

It localises to the secreted. In terms of biological role, lanthionine-containing peptide (lantipeptide) with unknown function. Does not show antibiotic activity against Lactococcus lactis 117 and Bacillus subtilis 6633 bacteria. Organisms that produce this peptide live in oligotrophic environments at very dilute concentrations, suggesting this peptide is not secreted to influence other bacteria. In Prochlorococcus marinus (strain MIT 9313), this protein is Lantipeptide prochlorosin 4.3.